Here is a 181-residue protein sequence, read N- to C-terminus: uncharacterized protein (181 aa).

The Macro domain occupies 1-178 (MVVAYKLSNG…VFKKVFDNSL (178 aa)).

This is an uncharacterized protein from Sulfolobus acidocaldarius (strain ATCC 33909 / DSM 639 / JCM 8929 / NBRC 15157 / NCIMB 11770).